The chain runs to 239 residues: SkfA peptide export ATP-binding protein SkfE (239 aa).

The ABC transporter domain maps to 4–232 (MQVQNLSKCY…AEWRKEVIRL (229 aa)). An ATP-binding site is contributed by 36–43 (GPNGAGKT).

It belongs to the ABC transporter superfamily. SkfA peptide export (TC 3.A.1.128.1) family.

Its subcellular location is the cell membrane. It catalyses the reaction sulfate(out) + ATP + H2O = sulfate(in) + ADP + phosphate + H(+). The enzyme catalyses thiosulfate(out) + ATP + H2O = thiosulfate(in) + ADP + phosphate + H(+). Functionally, probably part of the ABC transporter SkfEF involved in the export of the bacteriocin SKF. Probably responsible for energy coupling to the transport system. The polypeptide is SkfA peptide export ATP-binding protein SkfE (Bacillus subtilis (strain 168)).